Reading from the N-terminus, the 200-residue chain is MTDFPPLVIDYHGSRLAGVDEVGRGPLVGAVVAAAVILDPARPIEGLADSKTLSEKRRLALADAIREQAAACAVAEASAEEIDALNIFHATHLAMRRAIDALPVTAEYLLVDGNRMPGHHVPGQCVVKGDRRHAAIGAASILAKVTRDAQMVALHERHPEYGFARHKGYPTREHLAALERLGPLEEHRRSFAPVKQWQLL.

The RNase H type-2 domain occupies 14-200; the sequence is SRLAGVDEVG…FAPVKQWQLL (187 aa). 3 residues coordinate a divalent metal cation: D20, E21, and D112.

It belongs to the RNase HII family. It depends on Mn(2+) as a cofactor. Mg(2+) serves as cofactor.

It is found in the cytoplasm. The catalysed reaction is Endonucleolytic cleavage to 5'-phosphomonoester.. Endonuclease that specifically degrades the RNA of RNA-DNA hybrids. The chain is Ribonuclease HII from Chromohalobacter salexigens (strain ATCC BAA-138 / DSM 3043 / CIP 106854 / NCIMB 13768 / 1H11).